Here is a 510-residue protein sequence, read N- to C-terminus: MKKYILSLDQGTTSSRAILXNKKGEIVHSAQKEFTQHFPKPGWVEHNAQEIWGSILAVIATCLSEADVKPEQIAGIGITNQRETAVVWDKTTGKPIYNAIVWQSRQTAEICDELKEKGYGEMVREKTGLLIDAYFSGTKVKWILDNVEGAREKAENGDLLFGTIDTWLVWKLSGGKAHVTDYSNASRTLMFNIHDLQWDDELLDMLTVPKSMLPEVRPSSEVYGETIDYHFFGQNVPIAGVAGDQQAALFGQACFGEGMAKNTYGTGCFMLMNTGEKAVASEHGLLTTIAWGIDGKVNYALEGSIFVAGSAIQWLRDGMRMFKDASESEVYANRVESTDGVYVVPAFVGLGTPYWDSEVRGAMFGVTRGTTKEHFIRATLESLAYQXKDVLCAMEADSGIELKTLRVDGGAVKNNFLMKFQSDILDVPVERPVINETTALGAAYLAGLAVGYWKNQDEIKEQWHMDKRLNQQWKRKQAKSYMLDGKKQLKQQKLSNNHKQCYNGDKLIIR.

Threonine 12 lines the ADP pocket. Positions 12, 13, and 14 each coordinate ATP. Threonine 12 contributes to the sn-glycerol 3-phosphate binding site. An ADP-binding site is contributed by arginine 16. Arginine 82, glutamate 83, and tyrosine 134 together coordinate sn-glycerol 3-phosphate. Residues arginine 82, glutamate 83, and tyrosine 134 each coordinate glycerol. At histidine 230 the chain carries Phosphohistidine; by HPr. Residue aspartate 244 coordinates sn-glycerol 3-phosphate. Residues aspartate 244 and glutamine 245 each coordinate glycerol. Residues threonine 266 and glycine 309 each coordinate ADP. 4 residues coordinate ATP: threonine 266, glycine 309, glutamine 313, and glycine 410. ADP contacts are provided by glycine 410 and asparagine 414.

Belongs to the FGGY kinase family. Homotetramer and homodimer (in equilibrium). Post-translationally, the phosphoenolpyruvate-dependent sugar phosphotransferase system (PTS), including enzyme I, and histidine-containing protein (HPr) are required for the phosphorylation, which leads to the activation of the enzyme.

The enzyme catalyses glycerol + ATP = sn-glycerol 3-phosphate + ADP + H(+). It participates in polyol metabolism; glycerol degradation via glycerol kinase pathway; sn-glycerol 3-phosphate from glycerol: step 1/1. Its activity is regulated as follows. Activated by phosphorylation and inhibited by fructose 1,6-bisphosphate (FBP). In terms of biological role, key enzyme in the regulation of glycerol uptake and metabolism. Catalyzes the phosphorylation of glycerol to yield sn-glycerol 3-phosphate. The chain is Glycerol kinase from Bacillus cereus (strain ATCC 10987 / NRS 248).